A 158-amino-acid polypeptide reads, in one-letter code: SsrA-binding protein (158 aa).

Belongs to the SmpB family.

Its subcellular location is the cytoplasm. Required for rescue of stalled ribosomes mediated by trans-translation. Binds to transfer-messenger RNA (tmRNA), required for stable association of tmRNA with ribosomes. tmRNA and SmpB together mimic tRNA shape, replacing the anticodon stem-loop with SmpB. tmRNA is encoded by the ssrA gene; the 2 termini fold to resemble tRNA(Ala) and it encodes a 'tag peptide', a short internal open reading frame. During trans-translation Ala-aminoacylated tmRNA acts like a tRNA, entering the A-site of stalled ribosomes, displacing the stalled mRNA. The ribosome then switches to translate the ORF on the tmRNA; the nascent peptide is terminated with the 'tag peptide' encoded by the tmRNA and targeted for degradation. The ribosome is freed to recommence translation, which seems to be the essential function of trans-translation. The polypeptide is SsrA-binding protein (Caldicellulosiruptor bescii (strain ATCC BAA-1888 / DSM 6725 / KCTC 15123 / Z-1320) (Anaerocellum thermophilum)).